Here is a 519-residue protein sequence, read N- to C-terminus: Sterile alpha motif domain-containing protein 1 (519 aa).

Residues 1 to 11 (MAGPPALPPPE) show a composition bias toward pro residues. Disordered regions lie at residues 1–30 (MAGP…ASPH) and 87–232 (YKGS…PVSL). Residues 12–29 (TAAAATTAAAASSSAASP) show a composition bias toward low complexity. The SAMD1-like winged helix (WH) domain maps to 23-99 (SSSAASPHYQ…SISYRNAARV (77 aa)). Thr-107 bears the Phosphothreonine mark. Over residues 108-133 (PPAPPRVPRGGPAAPPPTPAPPPAPV) the composition is skewed to pro residues. Positions 134-147 (AAPTRAPRAAAATA) are enriched in low complexity. Position 150 is a phosphoserine (Ser-150). The span at 157 to 166 (GPRAQRAAPL) shows a compositional bias: low complexity. The span at 167 to 217 (AAPPPAPAAPPAAAPPAGPRRAPPPAVAAREPPAPPQQQQPPPPQPQPPPE) shows a compositional bias: pro residues. Positions 218–230 (GGAARAGGPARPV) are enriched in low complexity. At Ser-242 the chain carries Phosphoserine. Residues 261-271 (EAARGRLERTR) show a composition bias toward basic and acidic residues. Disordered regions lie at residues 261–381 (EAAR…PGSC) and 417–439 (PALP…KPTD). A compositionally biased stretch (acidic residues) spans 308-325 (KEEEDEDEDEEEEEEDNV). The SAM domain occupies 443 to 511 (WTVMDVVEYF…KVLQQGHFED (69 aa)).

In terms of assembly, homopolymerize into a closed pentameric ring. Interacts (via SAM domain) with L3MBTL3 (via SAM domain); the interaction mediates L3MBTL3 binding to chromatin. Interacts (via WH domain) with KDM1A; the interaction modulates KDM1A function. In terms of tissue distribution, expressed to similar levels in different organs. Expressed at higher levels in bone marrow, osteoclasts and spleen. Expressed in vascular smooth muscle cells.

It is found in the nucleus. The protein resides in the chromosome. Its subcellular location is the secreted. In terms of biological role, unmethylated CpG islands (CGIs)-binding protein which localizes to H3K4me3-decorated CGIs, where it acts as a transcriptional repressor. Tethers L3MBTL3 to chromatin and interacts with the KDM1A histone demethylase complex to modulate H3K4me2 and H3K4me3 levels at CGIs. Plays a role in atherogenesis by binding with LDL on cell surface and promoting LDL oxidation which leads to the formation of foam cell. The polypeptide is Sterile alpha motif domain-containing protein 1 (Mus musculus (Mouse)).